A 740-amino-acid polypeptide reads, in one-letter code: Homeobox protein 4 (740 aa).

Over residues 1–13 (MNTVEENNTKITD) the composition is skewed to polar residues. 2 disordered regions span residues 1-41 (MNTV…ENLS) and 179-491 (NNNN…NNEI). Low complexity-rich tracts occupy residues 14 to 34 (NNNN…NNKN), 179 to 241 (NNNN…PQQN), 251 to 288 (NNNN…NNNN), and 303 to 316 (STTD…SVPS). A coiled-coil region spans residues 254–287 (NINNNNINKNNNNYNNNNNNKNNNNNNNNNNNNN). A compositionally biased stretch (basic residues) spans 317 to 328 (NKKKSSKTKQKS). The segment covering 339-363 (HKSNYHQQPNQNSQHLQSKPNSPIL) has biased composition (polar residues). 2 stretches are compositionally biased toward low complexity: residues 365-390 (SSPL…SPPQ) and 397-491 (NNNF…NNEI). A coiled-coil region spans residues 472–500 (NTNTNNNNNKNNNNNNNNEIENNNNEELI). The segment at residues 605–667 (RPKKGAKLSK…NTRRRKVPTL (63 aa)) is a DNA-binding region (homeobox). The span at 686–722 (NNNNNNGGNSNFKNNNNNTITTTSTSNNNNNNNNNNH) shows a compositional bias: low complexity. Residues 686 to 740 (NNNNNNGGNSNFKNNNNNTITTTSTSNNNNNNNNNNHNEMECDDGENEESSEYDD) are disordered. Residues 726 to 740 (ECDDGENEESSEYDD) are compositionally biased toward acidic residues.

It is found in the nucleus. In terms of biological role, putative transcription factor. This Dictyostelium discoideum (Social amoeba) protein is Homeobox protein 4 (hbx4).